The primary structure comprises 376 residues: MTLAAQPILLTPGPLTTSDTTRDAMLRDWGSWDSDFNAITARLRERLLQIVHGEGTHECVPLQGSGTFSVEAAIGTLVPRDGHVLVPNNGAYCQRIAKICRVLGRQLTTIDYSEDRRVDPADVERALAADPTITHVALVHCETGAGVLNPLHDIAQVVAKHGRALIVDAMSSFGAIDIDARTTPFDAVIAASGKCLEGVPGLGFVIAKRSTLERCEGNSHSLAMDLYDQWVYMQRTTQWRFTPPTHVVAALDAAVGQYVDEGGLAARGGRYQRNYRALIDGMLALGFRPFLDPAIQAPIIVTFHAPDDPNYDFKRFYQEVKKRGYILYPGKLTEVETFRVGCIGHFGEAGIPGAVAAIADTLRAMGVRRVSAEAAA.

Lys-194 is subject to N6-(pyridoxal phosphate)lysine.

It belongs to the class-V pyridoxal-phosphate-dependent aminotransferase family. PhnW subfamily. Homodimer. Pyridoxal 5'-phosphate serves as cofactor.

The catalysed reaction is (2-aminoethyl)phosphonate + pyruvate = phosphonoacetaldehyde + L-alanine. Involved in phosphonate degradation. The protein is 2-aminoethylphosphonate--pyruvate transaminase 2 of Burkholderia lata (strain ATCC 17760 / DSM 23089 / LMG 22485 / NCIMB 9086 / R18194 / 383).